The chain runs to 195 residues: Imidazoleglycerol-phosphate dehydratase (195 aa).

Belongs to the imidazoleglycerol-phosphate dehydratase family.

It localises to the cytoplasm. It catalyses the reaction D-erythro-1-(imidazol-4-yl)glycerol 3-phosphate = 3-(imidazol-4-yl)-2-oxopropyl phosphate + H2O. Its pathway is amino-acid biosynthesis; L-histidine biosynthesis; L-histidine from 5-phospho-alpha-D-ribose 1-diphosphate: step 6/9. This is Imidazoleglycerol-phosphate dehydratase from Dechloromonas aromatica (strain RCB).